The sequence spans 94 residues: Pyrimidine/purine nucleoside phosphorylase (94 aa).

The protein belongs to the nucleoside phosphorylase PpnP family.

The enzyme catalyses a purine D-ribonucleoside + phosphate = a purine nucleobase + alpha-D-ribose 1-phosphate. The catalysed reaction is adenosine + phosphate = alpha-D-ribose 1-phosphate + adenine. It carries out the reaction cytidine + phosphate = cytosine + alpha-D-ribose 1-phosphate. It catalyses the reaction guanosine + phosphate = alpha-D-ribose 1-phosphate + guanine. The enzyme catalyses inosine + phosphate = alpha-D-ribose 1-phosphate + hypoxanthine. The catalysed reaction is thymidine + phosphate = 2-deoxy-alpha-D-ribose 1-phosphate + thymine. It carries out the reaction uridine + phosphate = alpha-D-ribose 1-phosphate + uracil. It catalyses the reaction xanthosine + phosphate = alpha-D-ribose 1-phosphate + xanthine. Functionally, catalyzes the phosphorolysis of diverse nucleosides, yielding D-ribose 1-phosphate and the respective free bases. Can use uridine, adenosine, guanosine, cytidine, thymidine, inosine and xanthosine as substrates. Also catalyzes the reverse reactions. In Cronobacter sakazakii (strain ATCC BAA-894) (Enterobacter sakazakii), this protein is Pyrimidine/purine nucleoside phosphorylase.